The primary structure comprises 305 residues: GTPase Era (305 aa).

Positions 11 to 181 (RSGFISFVGR…LDVITRLLPE (171 aa)) constitute an Era-type G domain. The segment at 19–26 (GRPNTGKS) is G1. GTP is bound at residue 19–26 (GRPNTGKS). The tract at residues 45–49 (ETTRH) is G2. The tract at residues 66–69 (DTPG) is G3. GTP contacts are provided by residues 66–70 (DTPGL) and 130–133 (TKVD). Residues 130-133 (TKVD) form a G4 region. Residues 160–162 (VSA) are G5. In terms of domain architecture, KH type-2 spans 212-291 (LKDELPHSVA…YLDLRIKVLK (80 aa)).

It belongs to the TRAFAC class TrmE-Era-EngA-EngB-Septin-like GTPase superfamily. Era GTPase family. As to quaternary structure, monomer.

It localises to the cytoplasm. Its subcellular location is the cell membrane. An essential GTPase that binds both GDP and GTP, with rapid nucleotide exchange. Plays a role in 16S rRNA processing and 30S ribosomal subunit biogenesis and possibly also in cell cycle regulation and energy metabolism. The protein is GTPase Era of Corynebacterium diphtheriae (strain ATCC 700971 / NCTC 13129 / Biotype gravis).